Consider the following 363-residue polypeptide: Spore germination protein YndE (363 aa).

The next 10 helical transmembrane spans lie at 8 to 28, 41 to 61, 84 to 104, 113 to 133, 149 to 169, 189 to 209, 218 to 238, 273 to 293, 305 to 325, and 335 to 355; these read ITTA…GVLT, DGWI…MIIA, LGHL…AFEV, FFLL…WIGL, MIFP…LGIF, VKTT…VAFM, AVVI…IMVI, FLLV…FYAA, PLSC…MPKN, and TVSH…LVIS.

Belongs to the amino acid-polyamine-organocation (APC) superfamily. Spore germination protein (SGP) (TC 2.A.3.9) family.

Its subcellular location is the cell membrane. Functionally, involved in the germinative response to L-alanine. Could be an amino acid transporter. This is Spore germination protein YndE (yndE) from Bacillus subtilis (strain 168).